A 113-amino-acid polypeptide reads, in one-letter code: UPF0122 protein Lreu_1156 (113 aa).

Belongs to the UPF0122 family.

Might take part in the signal recognition particle (SRP) pathway. This is inferred from the conservation of its genetic proximity to ftsY/ffh. May be a regulatory protein. The sequence is that of UPF0122 protein Lreu_1156 from Limosilactobacillus reuteri (strain DSM 20016) (Lactobacillus reuteri).